The chain runs to 383 residues: Protein pelota homolog (383 aa).

This sequence belongs to the eukaryotic release factor 1 family. Pelota subfamily. As to quaternary structure, component of the Pelota-HBS1L complex, also named Dom34-Hbs1 complex, composed of PELO and HBS1L. It depends on a divalent metal cation as a cofactor.

It localises to the cytoplasm. In terms of biological role, component of the Pelota-HBS1L complex, a complex that recognizes stalled ribosomes and triggers the No-Go Decay (NGD) pathway. In the Pelota-HBS1L complex, PELO recognizes ribosomes stalled at the 3' end of an mRNA and engages stalled ribosomes by destabilizing mRNA in the mRNA channel. Following mRNA extraction from stalled ribosomes by the SKI complex, the Pelota-HBS1L complex promotes recruitment of ABCE1, which drives the disassembly of stalled ribosomes, followed by degradation of damaged mRNAs as part of the NGD pathway. This Xenopus laevis (African clawed frog) protein is Protein pelota homolog (pelo).